The following is a 311-amino-acid chain: Pyrimidine-specific ribonucleoside hydrolase RihA (311 aa).

Residue H240 is part of the active site.

This sequence belongs to the IUNH family. RihA subfamily.

Functionally, hydrolyzes with equal efficiency cytidine or uridine to ribose and cytosine or uracil, respectively. The chain is Pyrimidine-specific ribonucleoside hydrolase RihA from Escherichia coli O157:H7.